Consider the following 146-residue polypeptide: Large ribosomal subunit protein uL13 (146 aa).

It belongs to the universal ribosomal protein uL13 family. In terms of assembly, part of the 50S ribosomal subunit.

Its function is as follows. This protein is one of the early assembly proteins of the 50S ribosomal subunit, although it is not seen to bind rRNA by itself. It is important during the early stages of 50S assembly. The protein is Large ribosomal subunit protein uL13 of Malacoplasma penetrans (strain HF-2) (Mycoplasma penetrans).